Here is a 414-residue protein sequence, read N- to C-terminus: Probable cytochrome P450 127A1 (414 aa).

Position 364 (Cys-364) interacts with heme.

This sequence belongs to the cytochrome P450 family. Heme is required as a cofactor.

Functionally, cytochromes P450 are a group of heme-thiolate monooxygenases. They oxidize a variety of structurally unrelated compounds, including steroids, fatty acids, and xenobiotics. This chain is Probable cytochrome P450 127A1 (cyp127A1), found in Sinorhizobium fredii (strain NBRC 101917 / NGR234).